A 385-amino-acid chain; its full sequence is S-adenosylmethionine synthase (385 aa).

Histidine 16 provides a ligand contact to ATP. Aspartate 18 contributes to the Mg(2+) binding site. Glutamate 44 is a binding site for K(+). L-methionine-binding residues include glutamate 57 and glutamine 100. The interval 100–110 (QSPDINQGVDK) is flexible loop. ATP-binding positions include 165 to 167 (DAK), 231 to 232 (RF), aspartate 240, 246 to 247 (RK), alanine 263, and lysine 267. Residue aspartate 240 participates in L-methionine binding. Lysine 271 lines the L-methionine pocket.

This sequence belongs to the AdoMet synthase family. As to quaternary structure, homotetramer; dimer of dimers. It depends on Mg(2+) as a cofactor. K(+) serves as cofactor.

The protein localises to the cytoplasm. It carries out the reaction L-methionine + ATP + H2O = S-adenosyl-L-methionine + phosphate + diphosphate. The protein operates within amino-acid biosynthesis; S-adenosyl-L-methionine biosynthesis; S-adenosyl-L-methionine from L-methionine: step 1/1. Its function is as follows. Catalyzes the formation of S-adenosylmethionine (AdoMet) from methionine and ATP. The overall synthetic reaction is composed of two sequential steps, AdoMet formation and the subsequent tripolyphosphate hydrolysis which occurs prior to release of AdoMet from the enzyme. This Vibrio cholerae serotype O1 (strain ATCC 39315 / El Tor Inaba N16961) protein is S-adenosylmethionine synthase.